A 218-amino-acid polypeptide reads, in one-letter code: Capsid protein (218 aa).

N-acetylmethionine; by host is present on Met1. The span at 1–10 (MDKSESTSAG) shows a compositional bias: low complexity. The interval 1–30 (MDKSESTSAGRNRRRRPRRGSRSASSSADA) is disordered. Positions 11–21 (RNRRRRPRRGS) are enriched in basic residues.

Belongs to the cucumovirus capsid protein family.

The protein resides in the virion. Functionally, capsid protein. Probably binds RNA and plays a role in packaging. The polypeptide is Capsid protein (Cucumis sativus (Cucumber)).